The chain runs to 515 residues: Cytochrome P450 monooxygenase ptmJ (515 aa).

4 consecutive transmembrane segments (helical) span residues 6–26, 50–70, 82–102, and 300–320; these read LGPFRTFTLLTVGLLLSLFVI, LGVVLAEILASPEGFFHLFCV, VFYLDLWPILPSIMVVAEPVV, and VIILASVVTAGAASYCYLFLH. Residue Cys-449 participates in heme binding.

It belongs to the cytochrome P450 family. Heme serves as cofactor.

It localises to the membrane. It functions in the pathway secondary metabolite biosynthesis. Functionally, cytochrome P450 monooxygenase; part of the gene cluster that mediates the biosynthesis of the indole diterpenes penitrems. The geranylgeranyl diphosphate (GGPP) synthase ptmG catalyzes the first step in penitrem biosynthesis via conversion of farnesyl pyrophosphate and isopentyl pyrophosphate into geranylgeranyl pyrophosphate (GGPP). Condensation of indole-3-glycerol phosphate with GGPP by the prenyl transferase ptmC then forms 3-geranylgeranylindole (3-GGI). Epoxidation by the FAD-dependent monooxygenase ptmM leads to a epoxidized-GGI that is substrate of the terpene cyclase ptmB for cyclization to yield paspaline. Paspaline is subsequently converted to 13-desoxypaxilline by the cytochrome P450 monooxygenase ptmP, the latter being then converted to paxilline by the cytochrome P450 monooxygenase ptmQ. Paxilline is converted to beta-paxitriol via C-10 ketoreduction by the short-chain dehydrogenase ptmH which can be monoprenylated at the C-20 by the indole diterpene prenyltransferase ptmD. A two-step elimination (acetylation and elimination) process performed by the O-acetyltransferase ptmV and ptmI leads to the production of the prenylated form of penijanthine. The FAD-linked oxidoreductase ptmO then converts the prenylated form of penijanthine into PC-M5 which is in turn transformed into PC-M4 by the aromatic dimethylallyltransferase ptmE. Five sequential oxidative transformations performed by the cytochrome P450 monooxygenases ptmK, ptmU, ptmL, ptmN and ptmJ yield the various penitrem compounds. PtmK, ptmU and ptmM are involved in the formation of the key bicyclic ring of penitrem C via the formation of the intermediates secopenitrem D and penitrem D. PtmL catalyzes the epoxidation of penitrem D and C to yield penitrem B and F, respectively. PtmJ catalyzes the last benzylic hydroxylation to convert penitrem B to prenitrem E and penitrem F to penitrem A. The sequence is that of Cytochrome P450 monooxygenase ptmJ from Penicillium ochrochloron.